A 317-amino-acid polypeptide reads, in one-letter code: Malate dehydrogenase (317 aa).

NAD(+)-binding positions include 10–15 and Asp34; that span reads GGGQIG. Substrate-binding residues include Arg83 and Arg89. NAD(+) contacts are provided by residues Asn96 and 119-121; that span reads ISN. Asn121 and Arg152 together coordinate substrate. The Proton acceptor role is filled by His176.

Belongs to the LDH/MDH superfamily. MDH type 3 family.

The catalysed reaction is (S)-malate + NAD(+) = oxaloacetate + NADH + H(+). Catalyzes the reversible oxidation of malate to oxaloacetate. The polypeptide is Malate dehydrogenase (Geobacter metallireducens (strain ATCC 53774 / DSM 7210 / GS-15)).